The chain runs to 511 residues: MTQYRITFEGPVILGAGLAGLTAALSATTGAAKTALVLSPTPLASGCSSAWAQGGMAAALSGDDSPALHAADTIAAGAGLCDPQAVDLLTREGPQAVRDLAALGAPFDRKADDGFVLSLEAAHSAARVARVGGDGAGAAIMAAVIAAVRATPGIEVRENARARRLLQDANGRVVGVLADVDGALVEIRSTAVILATGGVGGLYAVTTTPAQVRGEGLGLAALAGAMIADPEFVQFHPTAIDIGRDPAPLATEALRGEGAILRNADGKAFMADYHPAKELAPRDVVARALHAERAAGRGAFLDATAAVGAHFPHEFPAVFEACMSAGIDPRRQMIPVTPAVHYHMGGVATDLDGRASLPGLYAAGECASTGVQGANRLASNSLLEAAVFGARAGRAAAAEGATGGPPVSLEPLPDLPDAALQGLRKAMSRDAGVIRDADGLTRLLGEIETLEAGHGQGPILVAARLIVTAALAREESRGGHCRIDFPATDPVGVRTFVTLDGREPGLRYAAE.

FAD contacts are provided by residues 16 to 19 (AGLA) and 48 to 55 (SSAWAQGG). R282 (proton donor/acceptor) is an active-site residue. Residues E365 and 381–382 (SL) contribute to the FAD site.

Belongs to the FAD-dependent oxidoreductase 2 family. NadB subfamily. The cofactor is FAD.

Its subcellular location is the cytoplasm. It carries out the reaction L-aspartate + O2 = iminosuccinate + H2O2. It functions in the pathway cofactor biosynthesis; NAD(+) biosynthesis; iminoaspartate from L-aspartate (oxidase route): step 1/1. Its function is as follows. Catalyzes the oxidation of L-aspartate to iminoaspartate, the first step in the de novo biosynthesis of NAD(+). The polypeptide is L-aspartate oxidase (nadB) (Caulobacter vibrioides (strain ATCC 19089 / CIP 103742 / CB 15) (Caulobacter crescentus)).